The chain runs to 588 residues: Lysine--tRNA ligase (588 aa).

Polar residues predominate over residues 1 to 10 (MDSSVSTEPL). Positions 1–54 (MDSSVSTEPLSKNALKREKKAKEKEQLEQEKKAAAVAKRQMEQHNLPENDDLDP) are disordered. Basic and acidic residues predominate over residues 20–47 (KAKEKEQLEQEKKAAAVAKRQMEQHNLP).

Belongs to the class-II aminoacyl-tRNA synthetase family.

It is found in the cytoplasm. It carries out the reaction tRNA(Lys) + L-lysine + ATP = L-lysyl-tRNA(Lys) + AMP + diphosphate. The sequence is that of Lysine--tRNA ligase (LYSRS) from Solanum lycopersicum (Tomato).